A 327-amino-acid polypeptide reads, in one-letter code: DNA-directed RNA polymerase subunit alpha (327 aa).

The interval 1–233 (MVREKVKVST…NLFIPFLHVE (233 aa)) is alpha N-terminal domain (alpha-NTD). The tract at residues 267-327 (LAFQYIFIDQ…KKILDILEKK (61 aa)) is alpha C-terminal domain (alpha-CTD).

Belongs to the RNA polymerase alpha chain family. As to quaternary structure, in plastids the minimal PEP RNA polymerase catalytic core is composed of four subunits: alpha, beta, beta', and beta''. When a (nuclear-encoded) sigma factor is associated with the core the holoenzyme is formed, which can initiate transcription.

The protein resides in the plastid. It localises to the chloroplast. The enzyme catalyses RNA(n) + a ribonucleoside 5'-triphosphate = RNA(n+1) + diphosphate. Its function is as follows. DNA-dependent RNA polymerase catalyzes the transcription of DNA into RNA using the four ribonucleoside triphosphates as substrates. The sequence is that of DNA-directed RNA polymerase subunit alpha from Nasturtium officinale (Watercress).